A 557-amino-acid chain; its full sequence is MLSDIEIARAATLKPITEIAGRLNIPDESVLSYGHTIAKLDGEYLNSLSSKPRGKLVLVSAITPTPAGEGKTTTTVGLGDAFNRIGKKAVICLREPSLGPCFGVKGGAAGGGYAQVVPMERINLHFTGDFHAITSAHDLLAAMIDNHVHWGNEPVMDRNSITFRRVIDMNDRMLRNMVIGLGGKANGYPREGGFDISVASEVMAILCLASDLKDLRSRLERIIIGEDNDHNPVAAAKIKAAGAMTALLKDALQPNLVQTLEGNPALIHGGPFANIAHGCNSLIATKAALHLGDIAITEAGFGADLGAEKFFDIKCRQANLEPDAVVLVATIRALKMHGGVALADLKNENIAALETGFANLARHAENLAKFGVKTVVAINRFHSDTEAELDKLQDLCASIGLDSAVCTHFTDGGAGAEDLARKLSAILDAPKEDSFRLLYPDEMPLWKKIETIAKEIYRAGEVVPQGTVLKKLKSFEEQGFGDLPVCIAKTQSSFSADPKAKNAPTGHIFPIREVRLNAGAGFIVAISGNIMTMPGLPRHPAAENIDINEDNEIIGLA.

Residue 65–72 (TPAGEGKT) participates in ATP binding.

This sequence belongs to the formate--tetrahydrofolate ligase family.

The enzyme catalyses (6S)-5,6,7,8-tetrahydrofolate + formate + ATP = (6R)-10-formyltetrahydrofolate + ADP + phosphate. It participates in one-carbon metabolism; tetrahydrofolate interconversion. The protein is Formate--tetrahydrofolate ligase of Zymomonas mobilis subsp. mobilis (strain ATCC 31821 / ZM4 / CP4).